The primary structure comprises 361 residues: Putative F-box protein At3g19560 (361 aa).

The 47-residue stretch at 3-49 folds into the F-box domain; it reads MTMMSDISQDLLEEILSRVPITSLRAVKSTCKRWKDLLNDPSFSKKY.

The polypeptide is Putative F-box protein At3g19560 (Arabidopsis thaliana (Mouse-ear cress)).